A 295-amino-acid polypeptide reads, in one-letter code: Alpha-ketoglutarate-dependent dioxygenase alkB homolog 3 (295 aa).

Residues M1–Q48 are disordered. Residues S22–S35 show a composition bias toward low complexity. Substrate contacts are provided by residues W115 and Y141 to Y143. The Fe2OG dioxygenase domain occupies T172 to Y278. The residue at position 177 (L177) is a (4R)-5-hydroxyleucine; alternate. (4R)-5-oxoleucine; alternate is present on L177. N179 to Y181 is a binding site for 2-oxoglutarate. Positions 191 and 193 each coordinate Fe cation. Residue D194 coordinates substrate. Residue H257 coordinates Fe cation. Residues R269 to R275 and R275 contribute to the 2-oxoglutarate site.

Belongs to the alkB family. Interacts with the ASCC complex composed of ASCC1, ASCC2 and ASCC3. Interacts directly with ASCC3, and is thereby recruited to the ASCC complex. Interacts with OTUD4; the interaction is direct. Interacts with USP7 and USP9X. Requires Fe(2+) as cofactor. In terms of processing, ubiquitinated; undergoes 'Lys-48'-linked polyubiquitination. OTUD4 promotes USP7 and USP9X-dependent deubiquitination of 'Lys-48'-polyubiquitinated ALKBH3 promoting the repair of alkylated DNA lesions.

The protein resides in the nucleus. Its subcellular location is the cytoplasm. The catalysed reaction is an N(1)-methyladenosine in mRNA + 2-oxoglutarate + O2 = an adenosine in mRNA + formaldehyde + succinate + CO2. It catalyses the reaction a methylated nucleobase within DNA + 2-oxoglutarate + O2 = a nucleobase within DNA + formaldehyde + succinate + CO2. It carries out the reaction an N(1)-methyl-2'-deoxyadenosine in single-stranded DNA + 2-oxoglutarate + O2 = a 2'-deoxyadenosine in single-stranded DNA + formaldehyde + succinate + CO2 + H(+). The enzyme catalyses an N(3)-methyl-2'-deoxycytidine in single-stranded DNA + 2-oxoglutarate + O2 = a 2'-deoxycytidine in single-stranded DNA + formaldehyde + succinate + CO2 + H(+). The catalysed reaction is a 3,N(4)-etheno-2'-deoxycytidine in single-stranded DNA + 2-oxoglutarate + O2 + H2O = a 2'-deoxycytidine in single-stranded DNA + glyoxal + succinate + CO2. With respect to regulation, activated by ascorbate. Dioxygenase that mediates demethylation of DNA and RNA containing 1-methyladenosine (m1A). Repairs alkylated DNA containing 1-methyladenosine (m1A) and 3-methylcytosine (m3C) by oxidative demethylation. Has a strong preference for single-stranded DNA. Able to process alkylated m3C within double-stranded regions via its interaction with ASCC3, which promotes DNA unwinding to generate single-stranded substrate needed for ALKBH3. Can repair exocyclic 3,N4-ethenocytosine adducs in single-stranded DNA. Also acts on RNA. Demethylates N(1)-methyladenosine (m1A) RNA, an epigenetic internal modification of messenger RNAs (mRNAs) highly enriched within 5'-untranslated regions (UTRs) and in the vicinity of start codons. Requires molecular oxygen, alpha-ketoglutarate and iron. This chain is Alpha-ketoglutarate-dependent dioxygenase alkB homolog 3, found in Rattus norvegicus (Rat).